Consider the following 344-residue polypeptide: Phosphate acyltransferase (344 aa).

This sequence belongs to the PlsX family. Homodimer. Probably interacts with PlsY.

It localises to the cytoplasm. It carries out the reaction a fatty acyl-[ACP] + phosphate = an acyl phosphate + holo-[ACP]. Its pathway is lipid metabolism; phospholipid metabolism. Catalyzes the reversible formation of acyl-phosphate (acyl-PO(4)) from acyl-[acyl-carrier-protein] (acyl-ACP). This enzyme utilizes acyl-ACP as fatty acyl donor, but not acyl-CoA. The polypeptide is Phosphate acyltransferase (Thermosynechococcus vestitus (strain NIES-2133 / IAM M-273 / BP-1)).